Reading from the N-terminus, the 397-residue chain is Tryptophan synthase beta chain (397 aa).

N6-(pyridoxal phosphate)lysine is present on Lys-87.

This sequence belongs to the TrpB family. Tetramer of two alpha and two beta chains. It depends on pyridoxal 5'-phosphate as a cofactor.

It carries out the reaction (1S,2R)-1-C-(indol-3-yl)glycerol 3-phosphate + L-serine = D-glyceraldehyde 3-phosphate + L-tryptophan + H2O. Its pathway is amino-acid biosynthesis; L-tryptophan biosynthesis; L-tryptophan from chorismate: step 5/5. In terms of biological role, the beta subunit is responsible for the synthesis of L-tryptophan from indole and L-serine. The protein is Tryptophan synthase beta chain of Enterobacter sp. (strain 638).